Here is a 337-residue protein sequence, read N- to C-terminus: Holliday junction branch migration complex subunit RuvB (337 aa).

The segment at 1 to 20 (MQTRFVSPVNHDEEQDEPSV) is disordered. Positions 1 to 181 (MQTRFVSPVN…FGIILRLDLY (181 aa)) are large ATPase domain (RuvB-L). Residues R21, G62, K65, T66, T67, 128–130 (EDY), R171, Y181, and R218 contribute to the ATP site. Position 66 (T66) interacts with Mg(2+). A small ATPAse domain (RuvB-S) region spans residues 182–252 (DPSELTVIVT…IANTALFALG (71 aa)). Positions 255–337 (QKGLDILDRR…SHTRDLTSFL (83 aa)) are head domain (RuvB-H). Positions 310 and 315 each coordinate DNA.

Belongs to the RuvB family. In terms of assembly, homohexamer. Forms an RuvA(8)-RuvB(12)-Holliday junction (HJ) complex. HJ DNA is sandwiched between 2 RuvA tetramers; dsDNA enters through RuvA and exits via RuvB. An RuvB hexamer assembles on each DNA strand where it exits the tetramer. Each RuvB hexamer is contacted by two RuvA subunits (via domain III) on 2 adjacent RuvB subunits; this complex drives branch migration. In the full resolvosome a probable DNA-RuvA(4)-RuvB(12)-RuvC(2) complex forms which resolves the HJ.

It localises to the cytoplasm. It carries out the reaction ATP + H2O = ADP + phosphate + H(+). Its function is as follows. The RuvA-RuvB-RuvC complex processes Holliday junction (HJ) DNA during genetic recombination and DNA repair, while the RuvA-RuvB complex plays an important role in the rescue of blocked DNA replication forks via replication fork reversal (RFR). RuvA specifically binds to HJ cruciform DNA, conferring on it an open structure. The RuvB hexamer acts as an ATP-dependent pump, pulling dsDNA into and through the RuvAB complex. RuvB forms 2 homohexamers on either side of HJ DNA bound by 1 or 2 RuvA tetramers; 4 subunits per hexamer contact DNA at a time. Coordinated motions by a converter formed by DNA-disengaged RuvB subunits stimulates ATP hydrolysis and nucleotide exchange. Immobilization of the converter enables RuvB to convert the ATP-contained energy into a lever motion, pulling 2 nucleotides of DNA out of the RuvA tetramer per ATP hydrolyzed, thus driving DNA branch migration. The RuvB motors rotate together with the DNA substrate, which together with the progressing nucleotide cycle form the mechanistic basis for DNA recombination by continuous HJ branch migration. Branch migration allows RuvC to scan DNA until it finds its consensus sequence, where it cleaves and resolves cruciform DNA. The protein is Holliday junction branch migration complex subunit RuvB of Methanospirillum hungatei JF-1 (strain ATCC 27890 / DSM 864 / NBRC 100397 / JF-1).